Reading from the N-terminus, the 304-residue chain is Type II methyltransferase M.ScaI (304 aa).

It belongs to the N(4)/N(6)-methyltransferase family. N(4) subfamily.

It carries out the reaction a 2'-deoxycytidine in DNA + S-adenosyl-L-methionine = an N(4)-methyl-2'-deoxycytidine in DNA + S-adenosyl-L-homocysteine + H(+). Its function is as follows. A methylase that recognizes the double-stranded sequence 5'-AGTACT-3', methylates C-5 on both strands, and protects the DNA from cleavage by the ScaI endonuclease. The chain is Type II methyltransferase M.ScaI from Streptomyces caespitosus.